Reading from the N-terminus, the 215-residue chain is UPF0502 protein YceH (215 aa).

N6-acetyllysine is present on Lys-80.

It belongs to the UPF0502 family.

The protein is UPF0502 protein YceH of Shigella boydii serotype 4 (strain Sb227).